Consider the following 310-residue polypeptide: Cytochrome P450 monooxygenase ppzG (310 aa).

Residue C288 participates in heme binding.

Belongs to the cytochrome P450 family. It depends on heme as a cofactor.

It functions in the pathway secondary metabolite biosynthesis. In terms of biological role, cytochrome P450 monooxygenase; part of the gene cluster that mediates the biosynthesis of pyrrolopyrazines, secondary metabolites showing insecticidal activity. The role of ppzG within the pathway has still to be determined. The single multifunctional NRPS ppzA is sufficient to produce peramine via condensation of 1-pyrroline-5-carboxylate and arginine, N-methylation of the alpha-amino group of arginine and reduction of the thioester and the cyclization to form an iminium ion resulting in release from the peptide synthetase. Deprotonation of this intermediate and oxidation of the pyrroline ring would give rise to peramine. In Epichloe species that produce only peramine, the peramine synthetase gene is not localized in a gene cluster, in contrast to Metarhizium species that contain additional pyrrolopyrazine biosynthesis genes. The 2-oxoglutarate-Fe(II) type oxidoreductase ppzC hydroxylates peramine to yield the newly identified compound 8-hydroxyperamine whereas ppzD converts L-proline into trans-4-hydroxy-L-proline, a precursor of peramine biosynthesis. The sequence is that of Cytochrome P450 monooxygenase ppzG (ppzG) from Metarhizium majus (strain ARSEF 297).